A 177-amino-acid polypeptide reads, in one-letter code: tRNA-splicing endonuclease (177 aa).

Catalysis depends on residues Tyr-114, His-123, and Lys-154.

It belongs to the tRNA-intron endonuclease family. Archaeal short subfamily. In terms of assembly, homotetramer; although the tetramer contains four active sites, only two participate in the cleavage. Therefore, it should be considered as a dimer of dimers.

The catalysed reaction is pretRNA = a 3'-half-tRNA molecule with a 5'-OH end + a 5'-half-tRNA molecule with a 2',3'-cyclic phosphate end + an intron with a 2',3'-cyclic phosphate and a 5'-hydroxyl terminus.. In terms of biological role, endonuclease that removes tRNA introns. Cleaves pre-tRNA at the 5'- and 3'-splice sites to release the intron. The products are an intron and two tRNA half-molecules bearing 2',3' cyclic phosphate and 5'-OH termini. Recognizes a pseudosymmetric substrate in which 2 bulged loops of 3 bases are separated by a stem of 4 bp. This is tRNA-splicing endonuclease from Methanococcus vannielii (strain ATCC 35089 / DSM 1224 / JCM 13029 / OCM 148 / SB).